A 107-amino-acid chain; its full sequence is Anti-adapter protein IraM (107 aa).

The protein belongs to the IraM/RssC family.

The protein resides in the cytoplasm. Functionally, inhibits RpoS proteolysis by regulating RssB activity, thereby increasing the stability of the sigma stress factor RpoS during magnesium starvation. This Escherichia coli O17:K52:H18 (strain UMN026 / ExPEC) protein is Anti-adapter protein IraM.